Here is a 471-residue protein sequence, read N- to C-terminus: ATP synthase subunit beta (471 aa).

154–161 (GGAGVGKT) provides a ligand contact to ATP.

The protein belongs to the ATPase alpha/beta chains family. As to quaternary structure, F-type ATPases have 2 components, CF(1) - the catalytic core - and CF(0) - the membrane proton channel. CF(1) has five subunits: alpha(3), beta(3), gamma(1), delta(1), epsilon(1). CF(0) has three main subunits: a(1), b(2) and c(9-12). The alpha and beta chains form an alternating ring which encloses part of the gamma chain. CF(1) is attached to CF(0) by a central stalk formed by the gamma and epsilon chains, while a peripheral stalk is formed by the delta and b chains.

The protein localises to the cell membrane. The enzyme catalyses ATP + H2O + 4 H(+)(in) = ADP + phosphate + 5 H(+)(out). Produces ATP from ADP in the presence of a proton gradient across the membrane. The catalytic sites are hosted primarily by the beta subunits. This is ATP synthase subunit beta from Mesomycoplasma hyopneumoniae (strain J / ATCC 25934 / NCTC 10110) (Mycoplasma hyopneumoniae).